Reading from the N-terminus, the 1375-residue chain is DNA-directed RNA polymerase subunit beta (1375 aa).

The protein belongs to the RNA polymerase beta chain family. The RNAP catalytic core consists of 2 alpha, 1 beta, 1 beta' and 1 omega subunit. When a sigma factor is associated with the core the holoenzyme is formed, which can initiate transcription.

The enzyme catalyses RNA(n) + a ribonucleoside 5'-triphosphate = RNA(n+1) + diphosphate. DNA-dependent RNA polymerase catalyzes the transcription of DNA into RNA using the four ribonucleoside triphosphates as substrates. In Coxiella burnetii (strain Dugway 5J108-111), this protein is DNA-directed RNA polymerase subunit beta.